A 291-amino-acid chain; its full sequence is Cell division control protein 2 homolog 1 (291 aa).

The Protein kinase domain occupies 1–284 (GENVEKIGEG…ARSAVEHEYF (284 aa)). Residues 7-15 (IGEGTYGVV) and Lys30 each bind ATP. The residue at position 11 (Thr11) is a Phosphothreonine. Position 12 is a phosphotyrosine (Tyr12). Asp124 functions as the Proton acceptor in the catalytic mechanism. Thr158 bears the Phosphothreonine; by CAK mark.

Belongs to the protein kinase superfamily. CMGC Ser/Thr protein kinase family. CDC2/CDKX subfamily. Found in most organs including root, young leaf, stem, vegetative meristem and flower bud.

It carries out the reaction L-seryl-[protein] + ATP = O-phospho-L-seryl-[protein] + ADP + H(+). It catalyses the reaction L-threonyl-[protein] + ATP = O-phospho-L-threonyl-[protein] + ADP + H(+). The enzyme catalyses [DNA-directed RNA polymerase] + ATP = phospho-[DNA-directed RNA polymerase] + ADP + H(+). Its activity is regulated as follows. Phosphorylation at Thr-11 or Tyr-12 inactivates the enzyme, while phosphorylation at Thr-158 activates it. Plays a key role in the control of the eukaryotic cell cycle. Component of the kinase complex that phosphorylates the repetitive C-terminus of RNA polymerase II. The polypeptide is Cell division control protein 2 homolog 1 (CDC2A) (Medicago sativa (Alfalfa)).